The primary structure comprises 198 residues: Ribonuclease HII (198 aa).

In terms of domain architecture, RNase H type-2 spans 11–198 (TCIAGVDEVG…APVKRALGLA (188 aa)). Residues D17, E18, and D109 each contribute to the a divalent metal cation site.

The protein belongs to the RNase HII family. Mn(2+) is required as a cofactor. The cofactor is Mg(2+).

Its subcellular location is the cytoplasm. The enzyme catalyses Endonucleolytic cleavage to 5'-phosphomonoester.. Endonuclease that specifically degrades the RNA of RNA-DNA hybrids. This Pectobacterium carotovorum subsp. carotovorum (strain PC1) protein is Ribonuclease HII.